The chain runs to 158 residues: Snaclec stejaggregin-A subunit alpha (158 aa).

Residues 1–23 form the signal peptide; sequence MGRFISVSFGLLVVFLSLSGTGA. 3 disulfides stabilise this stretch: Cys27-Cys38, Cys55-Cys152, and Cys127-Cys144. Residues 34-153 enclose the C-type lectin domain; the sequence is YDWYCYKPFN…CQAKNPFVCK (120 aa).

Belongs to the snaclec family. In terms of assembly, heteromultimer; disulfide-linked. Expressed by the venom gland.

It localises to the secreted. Functionally, interferes with one step of hemostasis (modulation of platelet aggregation, or coagulation cascade, for example). This chain is Snaclec stejaggregin-A subunit alpha, found in Trimeresurus stejnegeri (Chinese green tree viper).